The primary structure comprises 556 residues: Phenylalanine--tRNA ligase beta subunit (556 aa).

Residues M269–P345 enclose the B5 domain. Residues D323, D329, E332, and E333 each contribute to the Mg(2+) site.

It belongs to the phenylalanyl-tRNA synthetase beta subunit family. Type 2 subfamily. Tetramer of two alpha and two beta subunits. Mg(2+) is required as a cofactor.

It is found in the cytoplasm. The enzyme catalyses tRNA(Phe) + L-phenylalanine + ATP = L-phenylalanyl-tRNA(Phe) + AMP + diphosphate + H(+). The polypeptide is Phenylalanine--tRNA ligase beta subunit (Thermofilum pendens (strain DSM 2475 / Hrk 5)).